Here is a 336-residue protein sequence, read N- to C-terminus: Melanoma-associated antigen B17 (336 aa).

The segment covering 1-17 (MPRGQASKRRAREKRRQ) has biased composition (basic residues). The tract at residues 1–108 (MPRGQASKRR…SSSESTGRDL (108 aa)) is disordered. Composition is skewed to low complexity over residues 39–54 (PSSS…QSFP) and 62–80 (SQRA…LTSS). Residues 90 to 103 (ESPNSFHGPSSSES) are compositionally biased toward polar residues. An MAGE domain is found at 109–336 (LNTKTGELVQ…RARASRSFQP (228 aa)).

This Homo sapiens (Human) protein is Melanoma-associated antigen B17 (MAGEB17).